The primary structure comprises 355 residues: D-alanine--D-alanine ligase (355 aa).

The region spanning 143 to 350 (KQIFSNLSIP…IDQLVAKLID (208 aa)) is the ATP-grasp domain. 178–233 (IEKLNLPVFVKPANSGSSLGISKAKNKSEIIKALQKAWEIDSRIVIEEGLNVRELE) contacts ATP. Positions 303, 317, and 319 each coordinate Mg(2+).

It belongs to the D-alanine--D-alanine ligase family. Requires Mg(2+) as cofactor. Mn(2+) is required as a cofactor.

It localises to the cytoplasm. The enzyme catalyses 2 D-alanine + ATP = D-alanyl-D-alanine + ADP + phosphate + H(+). Its pathway is cell wall biogenesis; peptidoglycan biosynthesis. Cell wall formation. The polypeptide is D-alanine--D-alanine ligase (Prochlorococcus marinus (strain MIT 9515)).